Here is a 175-residue protein sequence, read N- to C-terminus: NADH-ubiquinone oxidoreductase chain 6 (175 aa).

5 helical membrane-spanning segments follow: residues 1–21 (MMTY…VGFS), 25–45 (SPIY…GIVM), 47–67 (FGGS…MLVV), 88–108 (VVMG…LCVL), and 149–169 (YGVW…IVVL).

It belongs to the complex I subunit 6 family.

It localises to the mitochondrion membrane. It carries out the reaction a ubiquinone + NADH + 5 H(+)(in) = a ubiquinol + NAD(+) + 4 H(+)(out). In terms of biological role, core subunit of the mitochondrial membrane respiratory chain NADH dehydrogenase (Complex I) that is believed to belong to the minimal assembly required for catalysis. Complex I functions in the transfer of electrons from NADH to the respiratory chain. The immediate electron acceptor for the enzyme is believed to be ubiquinone. The chain is NADH-ubiquinone oxidoreductase chain 6 (MT-ND6) from Rhinolophus monoceros (Formosan lesser horseshoe bat).